A 253-amino-acid polypeptide reads, in one-letter code: Anamorsin homolog (253 aa).

The segment at 4–129 (FKGLQKSLYI…ETGSSARLSF (126 aa)) is N-terminal SAM-like domain. Residues 130 to 161 (AKKNSSTLNVWKISGDDDELIDEEDLLDEVDK) are linker. Residues Cys-172, Cys-181, Cys-184, and Cys-186 each coordinate [2Fe-2S] cluster. The segment at 172–186 (CSTTGKRKACKNCSC) is fe-S binding site A. [4Fe-4S] cluster-binding residues include Cys-214, Cys-217, Cys-225, and Cys-228. 2 short sequence motifs (cx2C motif) span residues 214 to 217 (CGNC) and 225 to 228 (CSSC). The fe-S binding site B stretch occupies residues 214–228 (CGNCYLGDAFRCSSC).

The protein belongs to the anamorsin family. As to quaternary structure, monomer. [2Fe-2S] cluster serves as cofactor. The cofactor is [4Fe-4S] cluster.

The protein resides in the cytoplasm. It localises to the mitochondrion intermembrane space. Component of the cytosolic iron-sulfur (Fe-S) protein assembly (CIA) machinery. Required for the maturation of extramitochondrial Fe-S proteins. Part of an electron transfer chain functioning in an early step of cytosolic Fe-S biogenesis, facilitating the de novo assembly of a [4Fe-4S] cluster on the cytosolic Fe-S scaffold complex. Electrons are transferred from NADPH via a FAD- and FMN-containing diflavin oxidoreductase. Together with the diflavin oxidoreductase, also required for the assembly of the diferric tyrosyl radical cofactor of ribonucleotide reductase (RNR), probably by providing electrons for reduction during radical cofactor maturation in the catalytic small subunit. This chain is Anamorsin homolog, found in Drosophila willistoni (Fruit fly).